Here is a 227-residue protein sequence, read N- to C-terminus: DNA repair protein RecO (227 aa).

Belongs to the RecO family.

Functionally, involved in DNA repair and RecF pathway recombination. This Pseudomonas savastanoi pv. phaseolicola (strain 1448A / Race 6) (Pseudomonas syringae pv. phaseolicola (strain 1448A / Race 6)) protein is DNA repair protein RecO.